Reading from the N-terminus, the 273-residue chain is Undecaprenyl-diphosphatase (273 aa).

9 helical membrane-spanning segments follow: residues 1–21 (MEPIQGVVLGIIQGLTEFLPV), 39–59 (PALFFDVSLHMGTLLAVLIVF), 63–83 (LGMMAVSVGRGIVAMFGGIAP), 92–112 (LKLALLIVVGSVPTAILGLGL), 118–138 (LFFSLPLVGAMLLVTGTLLWL), 165–185 (GLAVLPGISRSGATIAAGLFL), 195–215 (FSFLLCIPAIVGAELLSAVDL), 225–245 (ATVLGSLTAFVVGYGALKVLI), and 252–272 (RFYLFAPYCFILGGVTLWIGM).

Belongs to the UppP family.

It localises to the cell inner membrane. It catalyses the reaction di-trans,octa-cis-undecaprenyl diphosphate + H2O = di-trans,octa-cis-undecaprenyl phosphate + phosphate + H(+). Its function is as follows. Catalyzes the dephosphorylation of undecaprenyl diphosphate (UPP). Confers resistance to bacitracin. The protein is Undecaprenyl-diphosphatase of Desulfosudis oleivorans (strain DSM 6200 / JCM 39069 / Hxd3) (Desulfococcus oleovorans).